The sequence spans 329 residues: Small ribosomal subunit protein uS2 (329 aa).

It belongs to the universal ribosomal protein uS2 family.

The chain is Small ribosomal subunit protein uS2 from Bradyrhizobium sp. (strain ORS 278).